The chain runs to 323 residues: MTTGKGKILILGATGYLGKYMVKASISLGHPTYAYVMPLKKNSDDSKLQLLKEFESLGVTIFYGELSEHDKLVAVFKEVDIVISTLAVPQYLEQLKVIEAIKEAGNIKRFVPSEFGNEVDRVRALPRFQAVLDNKKKIRRATEAAGIPFTFVSANSLTAYFVDYLLHPRQKSEQVTIYGSGDAKAVLNYEEDVAAYTIKAADDPRAANRVLIIKPPKNIVSQLDLVSSWEKTTGSTLKMTHISEQEIIKLSESINFPENIHASILHNIFIAGAQLSFELTQDHDLEASELYPNYNYTSVDEYLKICLVNPPKPKLATYAQPST.

Residues 14 to 17 (TGYL), 36 to 47 (VMPLKKNSDDSK), 88 to 90 (VPQ), 113 to 115 (SEF), K135, and 155 to 157 (NSL) each bind NADP(+). K135 functions as the Proton donor/acceptor in the catalytic mechanism.

It belongs to the NmrA-type oxidoreductase family. Expressed in flowers, especially in corolla and tubes of petals, probably in both epidermal and mesophyll cell layers.

The enzyme catalyses (E)-isoeugenol + acetate + NADP(+) = (E)-coniferyl acetate + NADPH. Its pathway is aromatic compound metabolism; phenylpropanoid biosynthesis. Its activity is regulated as follows. Inhibited by zinc and copper ions. Repressed by 4-bromo-cinnamyl acetate. Involved in the biosynthesis of the floral volatile isoeugenol. Catalyzes the synthesis of the phenylpropene isoeugenol from coniferyl acetate. Phenylpropenes are the primary constituents of various essential plant oils. They are produced as antimicrobial and antianimal compounds, or as floral attractants of pollinators. Isoeugenol is a characteristic aromatic constituent of spices and a floral volatile compound. The chain is Isoeugenol synthase 1 from Petunia hybrida (Petunia).